We begin with the raw amino-acid sequence, 345 residues long: Molybdate/tungstate-binding protein WtpA (345 aa).

Positions 1-27 are cleaved as a signal peptide; that stretch reads MREGGVMKKRLLALIVAFAVLTAGCLG. Molybdate contacts are provided by residues 41-42, Ser75, 160-162, Glu218, and Tyr236; these read GS and DPC. Tungstate contacts are provided by residues 41-42, Ser75, 160-162, Glu218, and Tyr236; these read GS and DPC.

This sequence belongs to the bacterial solute-binding protein 1 family. WtpA subfamily. As to quaternary structure, monomer. The complex is composed of two ATP-binding proteins (WtpC), two transmembrane proteins (WtpB) and a solute-binding protein (WtpA).

The protein resides in the cell membrane. Functionally, part of the ABC transporter complex WtpABC involved in molybdate/tungstate import. Binds tungstate and molybdate, with a preference for tungstate. This is Molybdate/tungstate-binding protein WtpA from Pyrococcus furiosus (strain ATCC 43587 / DSM 3638 / JCM 8422 / Vc1).